A 307-amino-acid polypeptide reads, in one-letter code: 2-dehydropantoate 2-reductase (307 aa).

Residues 7 to 12 (GSGAMG), asparagine 102, and alanine 128 each bind NADP(+). Residue asparagine 102 participates in substrate binding. The Proton donor role is filled by lysine 184. Residues asparagine 188, asparagine 192, and serine 255 each contribute to the substrate site. Glutamate 268 serves as a coordination point for NADP(+).

This sequence belongs to the ketopantoate reductase family.

Its subcellular location is the cytoplasm. It carries out the reaction (R)-pantoate + NADP(+) = 2-dehydropantoate + NADPH + H(+). The protein operates within cofactor biosynthesis; (R)-pantothenate biosynthesis; (R)-pantoate from 3-methyl-2-oxobutanoate: step 2/2. Catalyzes the NADPH-dependent reduction of ketopantoate into pantoic acid. This Streptococcus pyogenes serotype M18 (strain MGAS8232) protein is 2-dehydropantoate 2-reductase (apbA).